A 164-amino-acid chain; its full sequence is Lipoprotein signal peptidase (164 aa).

A run of 4 helical transmembrane segments spans residues 12–32, 42–62, 70–90, and 102–122; these read WLWL…LILQ, LFPS…SFLA, WFFA…MYRS, and ALII…GFVV. Residues Asp-123 and Asp-141 contribute to the active site. Residues 137-157 traverse the membrane as a helical segment; sequence FNLADTAICVGAALIVLEGFL.

Belongs to the peptidase A8 family.

It is found in the cell inner membrane. The enzyme catalyses Release of signal peptides from bacterial membrane prolipoproteins. Hydrolyzes -Xaa-Yaa-Zaa-|-(S,diacylglyceryl)Cys-, in which Xaa is hydrophobic (preferably Leu), and Yaa (Ala or Ser) and Zaa (Gly or Ala) have small, neutral side chains.. It functions in the pathway protein modification; lipoprotein biosynthesis (signal peptide cleavage). In terms of biological role, this protein specifically catalyzes the removal of signal peptides from prolipoproteins. This is Lipoprotein signal peptidase from Shigella flexneri serotype 5b (strain 8401).